The chain runs to 476 residues: Protein transport protein Sec61 subunit alpha isoform 1 (476 aa).

Residues 1–33 are Cytoplasmic-facing; it reads MGIKFLEVIKPFCVILPEIQKPERKIQFKEKVL. Residues 34 to 53 form a helical membrane-spanning segment; the sequence is WTAITLFIFLVCCQIPLFGI. Residues 54–76 are Lumenal-facing; the sequence is MSSDSADPFYWMRVILASNRGTL. A helical membrane pass occupies residues 77–96; the sequence is MELGISPIVTSGLIMQLLAG. Over 97–117 the chain is Cytoplasmic; it reads AKIIEVGDTPKDRALFNGAQK. Residues 118–138 form a helical membrane-spanning segment; the sequence is LFGMTITIGQSIVYVMTGMYG. Residues 139-144 lie on the Lumenal side of the membrane; that stretch reads DPSEMG. The chain crosses the membrane as a helical span at residues 145–165; that stretch reads AGVCLLITIQLFVAGLIVLLL. At 166–172 the chain is on the cytoplasmic side; sequence DELLQKG. Residues 173 to 193 form a helical membrane-spanning segment; that stretch reads YGLGSGISLFIATNICETIVW. The Lumenal portion of the chain corresponds to 194–240; that stretch reads KAFSPTTVNTGRGMEFEGAIIALFHLLATRTDKVRALREAFYRQNLP. A helical transmembrane segment spans residues 241–261; the sequence is NLMNLIATIFVFAVVIYFQGF. Over 262–288 the chain is Cytoplasmic; that stretch reads RVDLPIKSARYRGQYNTYPIKLFYTSN. The helical transmembrane segment at 289–309 threads the bilayer; it reads IPIILQSALVSNLYVISQMLS. The Lumenal segment spans residues 310–354; it reads ARFSGNLLVSLLGTWSDTSSGGPARAYPVGGLCYYLSPPESFGSV. Residues 355–375 traverse the membrane as a helical segment; that stretch reads LEDPVHAVVYIVFMLGSCAFF. Over 376 to 420 the chain is Cytoplasmic; it reads SKTWIEVSGSSAKDVAKQLKEQQMVMRGHRETSMVHELNRYIPTA. A helical membrane pass occupies residues 421-441; that stretch reads AAFGGLCIGALSVLADFLGAI. Residues 442–445 are Lumenal-facing; it reads GSGT. Residues 446–462 form a helical membrane-spanning segment; sequence GILLAVTIIYQYFEIFV. The Cytoplasmic portion of the chain corresponds to 463–476; sequence KEQSEVGSMGALLF.

This sequence belongs to the SecY/SEC61-alpha family. As to quaternary structure, the SEC61 channel-forming translocon complex consists of channel-forming core components SEC61A1, SEC61B and SEC61G and different auxiliary components such as SEC62 and SEC63. The SEC61 channel associates with the multi-pass translocon (MPT) complex.

It is found in the endoplasmic reticulum membrane. Its function is as follows. Component of SEC61 channel-forming translocon complex that mediates transport of signal peptide-containing precursor polypeptides across the endoplasmic reticulum (ER). Forms a ribosome receptor and a gated pore in the ER membrane, both functions required for cotranslational translocation of nascent polypeptides. May cooperate with auxiliary protein SEC62, SEC63 and HSPA5/BiP to enable post-translational transport of small presecretory proteins. The SEC61 channel is also involved in ER membrane insertion of transmembrane proteins: it mediates membrane insertion of the first few transmembrane segments of proteins, while insertion of subsequent transmembrane regions of multi-pass membrane proteins is mediated by the multi-pass translocon (MPT) complex. The SEC61 channel cooperates with the translocating protein TRAM1 to import nascent proteins into the ER. Controls the passive efflux of calcium ions from the ER lumen to the cytosol through SEC61 channel, contributing to the maintenance of cellular calcium homeostasis. Plays a critical role in nephrogenesis, specifically at pronephros stage. The protein is Protein transport protein Sec61 subunit alpha isoform 1 (SEC61A1) of Bos taurus (Bovine).